Consider the following 363-residue polypeptide: MAQPALKVVDMPPVDKDKSKAIDAALSQIERAFGKGSIMRLGKSDKVQEVETVSTGSLGLDIALGVGGLPRGRVIEIYGPESSGKTTLALHTIAEAQKKGGVCAFVDAEHALDPVYARKLGVNLDDLLISQPDTGEQALEITDTLVRSGAIDVLVVDSVAALTPRAEIEGEMGESQPGLQARLMSQALRKLTGSISRSNCMVIFINQIRMKIGVMYGSPETTTGGNALKFYASVRLDIRRISTLKDRDEAIGNQVRVKVVKNKVAPPFKQVEFDIMFGEGVSKVGELIDLGVKAGIVEKSGAWFSYNSQRLGQGRENSKGFLRDNPKIAAEIEGSIRQNSGLVAEKILENAAPTADDLDEGEA.

An ATP-binding site is contributed by 79–86 (GPESSGKT).

The protein belongs to the RecA family.

Its subcellular location is the cytoplasm. In terms of biological role, can catalyze the hydrolysis of ATP in the presence of single-stranded DNA, the ATP-dependent uptake of single-stranded DNA by duplex DNA, and the ATP-dependent hybridization of homologous single-stranded DNAs. It interacts with LexA causing its activation and leading to its autocatalytic cleavage. The protein is Protein RecA of Methylobacterium radiotolerans (strain ATCC 27329 / DSM 1819 / JCM 2831 / NBRC 15690 / NCIMB 10815 / 0-1).